A 319-amino-acid polypeptide reads, in one-letter code: Lipopolysaccharide heptosyltransferase 1 (319 aa).

ADP-L-glycero-beta-D-manno-heptose contacts are provided by T187, T188, K192, E222, M242, D261, T262, G263, and H266.

This sequence belongs to the glycosyltransferase 9 family.

Its subcellular location is the cell inner membrane. The enzyme catalyses an alpha-Kdo-(2-&gt;4)-alpha-Kdo-(2-&gt;6)-lipid A + ADP-L-glycero-beta-D-manno-heptose = an L-alpha-D-Hep-(1-&gt;5)-[alpha-Kdo-(2-&gt;4)]-alpha-Kdo-(2-&gt;6)-lipid A + ADP + H(+). It catalyses the reaction alpha-Kdo-(2-&gt;4)-alpha-Kdo-(2-&gt;6)-lipid A (E. coli) + ADP-L-glycero-beta-D-manno-heptose = L-alpha-D-Hep-(1-&gt;5)-[alpha-Kdo-(2-&gt;4)]-alpha-Kdo-(2-&gt;6)-lipid A (E. coli) + ADP + H(+). It participates in bacterial outer membrane biogenesis; LPS core biosynthesis. Functionally, glycosyltransferase involved in the biosynthesis of the core oligosaccharide region of lipopolysaccharide (LPS). Catalyzes the addition of the first heptose unit to one 3-deoxy-D-manno-octulosonic acid (Kdo) residue of the Kdo2-lipid A module. The analog ADP-mannose can serve as an alternative donor in place of ADP-L-glycero-D-manno-heptose for the glycosylation of Kdo2-lipid A. Displays no activity with ADP-glucose, GDP-mannose, UDP-glucose or UDP-galactose. In Escherichia coli (strain K12), this protein is Lipopolysaccharide heptosyltransferase 1.